Reading from the N-terminus, the 224-residue chain is Cysteine S-methyltransferase NleE (224 aa).

Residues 49–52 are interaction with host proteins TAB2, TAB3 and ZRANB3; it reads GITR. Residues Ala92, Ser98, Arg107, Gln111, Tyr204, and Glu208 each contribute to the S-adenosyl-L-methionine site.

It belongs to the NleE/OspZ family. In terms of assembly, monomer.

The protein localises to the secreted. It is found in the host nucleus. The enzyme catalyses L-cysteinyl-[protein] + S-adenosyl-L-methionine = S-methyl-L-cysteinyl-[protein] + S-adenosyl-L-homocysteine + H(+). Cysteine methyltransferase effector that inhibits host cell NF-kappa-B activation by preventing nuclear translocation of host protein RELA/p65. Acts by mediating cysteine methylation of host proteins TAB2 and TAB3: methylation of a conserved cysteine residue of the RanBP2-type zinc finger (NZF) of TAB2 and TAB3 disrupts zinc-binding, thereby inactivating the ubiquitin chain-binding activity of TAB2 and TAB3, leading to NF-kappa-B inactivation. Also mediates cysteine methylation of host protein ZRANB3, inactivating its ability to bind ubiquitin chains. This chain is Cysteine S-methyltransferase NleE, found in Escherichia coli O157:H7.